We begin with the raw amino-acid sequence, 234 residues long: Phosphoribosylformylglycinamidine synthase subunit PurQ (234 aa).

The Glutamine amidotransferase type-1 domain occupies 3–231 (AAVVVFPGSN…ALYLERRKDH (229 aa)). The active-site Nucleophile is the cysteine 87. Residues histidine 200 and glutamate 202 contribute to the active site.

In terms of assembly, part of the FGAM synthase complex composed of 1 PurL, 1 PurQ and 2 PurS subunits.

Its subcellular location is the cytoplasm. The enzyme catalyses N(2)-formyl-N(1)-(5-phospho-beta-D-ribosyl)glycinamide + L-glutamine + ATP + H2O = 2-formamido-N(1)-(5-O-phospho-beta-D-ribosyl)acetamidine + L-glutamate + ADP + phosphate + H(+). It catalyses the reaction L-glutamine + H2O = L-glutamate + NH4(+). The protein operates within purine metabolism; IMP biosynthesis via de novo pathway; 5-amino-1-(5-phospho-D-ribosyl)imidazole from N(2)-formyl-N(1)-(5-phospho-D-ribosyl)glycinamide: step 1/2. Part of the phosphoribosylformylglycinamidine synthase complex involved in the purines biosynthetic pathway. Catalyzes the ATP-dependent conversion of formylglycinamide ribonucleotide (FGAR) and glutamine to yield formylglycinamidine ribonucleotide (FGAM) and glutamate. The FGAM synthase complex is composed of three subunits. PurQ produces an ammonia molecule by converting glutamine to glutamate. PurL transfers the ammonia molecule to FGAR to form FGAM in an ATP-dependent manner. PurS interacts with PurQ and PurL and is thought to assist in the transfer of the ammonia molecule from PurQ to PurL. This chain is Phosphoribosylformylglycinamidine synthase subunit PurQ, found in Pseudothermotoga lettingae (strain ATCC BAA-301 / DSM 14385 / NBRC 107922 / TMO) (Thermotoga lettingae).